Consider the following 279-residue polypeptide: Putative E3 ubiquitin-protein ligase C36B7.05c (279 aa).

Residues 27 to 122 (DDESAQCNNC…VCVNCRQQLS (96 aa)) form an FYVE-type zinc finger. Residues C33, C36, C49, C52, C57, C60, C114, and C117 each contribute to the Zn(2+) site. Phosphoserine is present on S200. The RING-type; atypical zinc-finger motif lies at 230–273 (CIICFEEFAAGDRVARIEYCLCIFHLKCYRDWLSTGAAGCPVHA).

The protein localises to the cytoplasm. Its subcellular location is the nucleus. The protein resides in the endosome membrane. It is found in the vacuole membrane. It carries out the reaction S-ubiquitinyl-[E2 ubiquitin-conjugating enzyme]-L-cysteine + [acceptor protein]-L-lysine = [E2 ubiquitin-conjugating enzyme]-L-cysteine + N(6)-ubiquitinyl-[acceptor protein]-L-lysine.. The protein operates within protein modification; protein ubiquitination. In terms of biological role, functions as an E3 ubiquitin-protein ligase. Binds phospholipid vesicles containing phosphatidylinositol 3-phosphate. In Schizosaccharomyces pombe (strain 972 / ATCC 24843) (Fission yeast), this protein is Putative E3 ubiquitin-protein ligase C36B7.05c.